A 173-amino-acid polypeptide reads, in one-letter code: MAASVDPLVVGRVIGDVLDMFIPTANMSVYFGPKHITNGCEIKPSTAVNPPKVNISGHSDELYTLVMTDPDAPSPSEPNMREWVHWIVVDIPGGTNPSRGKEILPYMEPRPPVGIHRYILVLFRQNSPVGLMVQQPPSRANFSTRMFAGHFDLGLPVATVYFNAQKEPASRRR.

N-acetylalanine is present on Ala2.

The protein belongs to the phosphatidylethanolamine-binding protein family. Expressed in gametophytes and developing seeds.

It localises to the cytoplasm. Its function is as follows. May form complexes with phosphorylated ligands by interfering with kinases and their effectors. Regulates seed germination via the abscisic acid (ABA) and gibberellic acid (GA)signaling pathways. During seed germination, MFT expression is directly repressed by ABI3 or promoted by ABI5 in the ABA signaling pathway. Involved in a negative feedback regulation of ABA signaling. Promotes embryo growth by direct repression of ABI5. In the GA signaling pathway, MFT expression is promoted by the DELLA protein RGL2 during seed germination. May regulate seed germination and fertility through the brassinosteroid (BR) signaling pathway. This is Protein MOTHER of FT and TFL1 (MFT) from Arabidopsis thaliana (Mouse-ear cress).